We begin with the raw amino-acid sequence, 476 residues long: Bifunctional protein HldE (476 aa).

The interval methionine 1–threonine 318 is ribokinase. An ATP-binding site is contributed by asparagine 195–glutamate 198. Residue aspartate 264 is part of the active site. The interval methionine 344–glycine 476 is cytidylyltransferase.

This sequence in the N-terminal section; belongs to the carbohydrate kinase PfkB family. In the C-terminal section; belongs to the cytidylyltransferase family. In terms of assembly, homodimer.

It carries out the reaction D-glycero-beta-D-manno-heptose 7-phosphate + ATP = D-glycero-beta-D-manno-heptose 1,7-bisphosphate + ADP + H(+). The catalysed reaction is D-glycero-beta-D-manno-heptose 1-phosphate + ATP + H(+) = ADP-D-glycero-beta-D-manno-heptose + diphosphate. Its pathway is nucleotide-sugar biosynthesis; ADP-L-glycero-beta-D-manno-heptose biosynthesis; ADP-L-glycero-beta-D-manno-heptose from D-glycero-beta-D-manno-heptose 7-phosphate: step 1/4. It participates in nucleotide-sugar biosynthesis; ADP-L-glycero-beta-D-manno-heptose biosynthesis; ADP-L-glycero-beta-D-manno-heptose from D-glycero-beta-D-manno-heptose 7-phosphate: step 3/4. In terms of biological role, catalyzes the phosphorylation of D-glycero-D-manno-heptose 7-phosphate at the C-1 position to selectively form D-glycero-beta-D-manno-heptose-1,7-bisphosphate. Functionally, catalyzes the ADP transfer from ATP to D-glycero-beta-D-manno-heptose 1-phosphate, yielding ADP-D-glycero-beta-D-manno-heptose. The sequence is that of Bifunctional protein HldE from Vibrio cholerae serotype O1 (strain M66-2).